The sequence spans 394 residues: Elongation factor Tu (394 aa).

Residues 10–204 form the tr-type G domain; sequence KPHINIGTIG…AVDDNIPTPE (195 aa). The segment at 19–26 is G1; that stretch reads GHVDHGKT. 19–26 lines the GTP pocket; that stretch reads GHVDHGKT. T26 provides a ligand contact to Mg(2+). The segment at 60 to 64 is G2; sequence GITIN. The tract at residues 81-84 is G3; that stretch reads DCPG. GTP-binding positions include 81–85 and 136–139; these read DCPGH and NKID. Residues 136–139 form a G4 region; it reads NKID. The G5 stretch occupies residues 174–176; sequence SAL.

Belongs to the TRAFAC class translation factor GTPase superfamily. Classic translation factor GTPase family. EF-Tu/EF-1A subfamily. In terms of assembly, monomer.

It is found in the cytoplasm. It catalyses the reaction GTP + H2O = GDP + phosphate + H(+). Functionally, GTP hydrolase that promotes the GTP-dependent binding of aminoacyl-tRNA to the A-site of ribosomes during protein biosynthesis. This Chlamydia abortus (strain DSM 27085 / S26/3) (Chlamydophila abortus) protein is Elongation factor Tu.